Consider the following 208-residue polypeptide: Adenylyl-sulfate kinase (208 aa).

G31–S38 contributes to the ATP binding site. Catalysis depends on S105, which acts as the Phosphoserine intermediate.

This sequence belongs to the APS kinase family.

It catalyses the reaction adenosine 5'-phosphosulfate + ATP = 3'-phosphoadenylyl sulfate + ADP + H(+). It functions in the pathway sulfur metabolism; hydrogen sulfide biosynthesis; sulfite from sulfate: step 2/3. Catalyzes the synthesis of activated sulfate. The chain is Adenylyl-sulfate kinase from Pseudomonas entomophila (strain L48).